A 465-amino-acid chain; its full sequence is Mitochondrial-processing peptidase subunit beta (465 aa).

A Zn(2+)-binding site is contributed by histidine 79. The active-site Proton acceptor is the glutamate 82. Zn(2+) is bound by residues histidine 83 and glutamate 159.

This sequence belongs to the peptidase M16 family. Heterodimer of an alpha subunit and a beta subunit subunits, forming the mitochondrial processing protease (MPP) in which the alpha subunit is involved in substrate recognition and binding and the beta subunit is the catalytic subunit. Zn(2+) serves as cofactor.

It is found in the mitochondrion matrix. It carries out the reaction Release of N-terminal transit peptides from precursor proteins imported into the mitochondrion, typically with Arg in position P2.. With respect to regulation, binding to the alpha subunit is required for catalytic activity. In terms of biological role, catalytic subunit of the essential mitochondrial processing protease (MPP), which cleaves the mitochondrial sequence off newly imported precursors proteins. Preferentially, cleaves after an arginine at position P2. The sequence is that of Mitochondrial-processing peptidase subunit beta (MPP1) from Blastocladiella emersonii (Aquatic fungus).